A 413-amino-acid chain; its full sequence is Unsaturated 3S-rhamnoglycuronyl hydrolase (413 aa).

An N-terminal signal peptide occupies residues 1–21; the sequence is MNHTKLKLSAVALTLALGLSA. Cysteine 22 carries the N-palmitoyl cysteine lipid modification. A lipid anchor (S-diacylglycerol cysteine) is attached at cysteine 22. The active-site Proton donor is aspartate 203.

This sequence belongs to the glycosyl hydrolase 105 family.

Its subcellular location is the cell membrane. Functionally, glucuronyl hydrolase involved in ulvan degradation. Ulvan is the main polysaccharide component of the Ulvales (green seaweed) cell wall. It is composed of disaccharide building blocks comprising 3-sulfated rhamnose (Rha3S) linked to D-glucuronic acid (GlcA), L-iduronic acid (IduA), or D-xylose (Xyl). Unsaturated 3S-rhamnoglycuronyl hydrolase works together with ulvan lyases to fully degrade the ulvan polymer, catalyzing specifically the cleavage of the unsaturated 4-deoxy-L-threo-hex-4-enopyranosiduronic acid (deltaUA) of the deltaUA-oligosaccharides deltaUA-Rha3S, deltaUA-Rha3S-IduA-Rha3S and deltaUA-Rha3S-Xyl-Rha3S, the end products of the ulvan lyase reaction. This chain is Unsaturated 3S-rhamnoglycuronyl hydrolase, found in Alteromonas sp. (strain LOR).